The sequence spans 539 residues: Chaperonin GroEL 1 (539 aa).

Residues 29-32 (TLGP), 86-90 (DGTTT), Gly413, 478-480 (NAA), and Asp494 contribute to the ATP site. Residues 520-539 (IVDKPAEPEDDGHGHHGHAH) are disordered. Residues 523-533 (KPAEPEDDGHG) are compositionally biased toward basic and acidic residues.

This sequence belongs to the chaperonin (HSP60) family. As to quaternary structure, forms a cylinder of 14 subunits composed of two heptameric rings stacked back-to-back. Interacts with the co-chaperonin GroES.

The protein localises to the cytoplasm. It catalyses the reaction ATP + H2O + a folded polypeptide = ADP + phosphate + an unfolded polypeptide.. Its function is as follows. Together with its co-chaperonin GroES, plays an essential role in assisting protein folding. The GroEL-GroES system forms a nano-cage that allows encapsulation of the non-native substrate proteins and provides a physical environment optimized to promote and accelerate protein folding. The polypeptide is Chaperonin GroEL 1 (Mycobacterium ulcerans (strain Agy99)).